A 90-amino-acid polypeptide reads, in one-letter code: MDSKDQTMFYNFGDDSIEEDVKKLMKQVYVALEEKGYNPVNQIVGYLLSGDPAYIPRHKDARSLIRRLERDEIIEELVKAYLKNNEIGEK.

This sequence belongs to the UPF0297 family.

The chain is UPF0297 protein lwe1516 from Listeria welshimeri serovar 6b (strain ATCC 35897 / DSM 20650 / CCUG 15529 / CIP 8149 / NCTC 11857 / SLCC 5334 / V8).